We begin with the raw amino-acid sequence, 115 residues long: Large ribosomal subunit protein bL19 (115 aa).

It belongs to the bacterial ribosomal protein bL19 family.

Functionally, this protein is located at the 30S-50S ribosomal subunit interface and may play a role in the structure and function of the aminoacyl-tRNA binding site. The polypeptide is Large ribosomal subunit protein bL19 (Francisella tularensis subsp. holarctica (strain FTNF002-00 / FTA)).